The sequence spans 716 residues: uncharacterized protein (716 aa).

Disordered stretches follow at residues 84–103 and 153–189; these read SPSI…ERYP and VTDE…SQTQ. S97 carries the post-translational modification Phosphoserine. Glycyl lysine isopeptide (Lys-Gly) (interchain with G-Cter in SUMO2) cross-links involve residues K201, K204, K237, K283, and K626.

This is an uncharacterized protein from Homo sapiens (Human).